The chain runs to 1578 residues: MSFTLHSVFFTLKVSSFLGSLVGLCLGLEFMGLPNQWARYLRWDASTRSDLSFQFKTNVSTGLLLYLDDGGVCDFLCLSLVDGRVQLRFSMDCAETTVLSNKQVNDSSWHFLMVSRDRVRTGLVIDGEGQSGELRAQRPYMDVVSDLFLGGGPADIRPSALTLDGVQNMPGFKGLMLDLKYGNSEPRLLGSQSVQLEAEGPCGERPCENGGICFLLDGHPTCDCSTTGYGGTLCSEDVSQGPGLSHLMMSEQGRSKAREENVATFRGSEYLSYDLSQNPIQSSSSEITLSFKTWQRNGLILHTGKSADYVNLALKDGAVSLVINLGSGAFEAIVEPVNGKFNDNAWHDVKVTRNLRQVTISVDGILTTTGYTQEDYTMLGSDDSSYVGPSPSTADLPGSPVSNNFMGCLKEVVYKNNDIRLELSRLARIGATKMKIYGEVVFKCENVATLDPINFETPEAYISLPKWNTKRMGSISFDFRTTEPNGLILLTHGKPQERKDVRSQKNTKVDFFAVELLDGNLYLLLDMGSGTIKVKATQKKANDGEWYHVDIQRDGRSGTISVNSRRTPFTASGQSEILDLEGDMYLGGLPENRAGLILPTELWTAMLNYGYVGCIRDLFIDGRSKNIRQLAEMQNAAGVKSSCSRMSAKQCDSYPCKNNAVCKDGWNRFICDCTGTGYWGRTCEREASILSYDGSMYMKVIMPMVMHTEAEDVSFRFMSQRAYGLLVATTSRDSADTLRLELDGGRVKLMVNLDCIRINCNSSKGPETLYAGQKLNDNEWHTVRVVRRGKSLKLTVDDDVAEGTMVGDHTRLEFHNIETGIMTEKRYISVVPSSFIGHLQSLMFNGLLYIDLCKNGDIDYCELKARFGLRNIIADPVTFKTKSSYLTLATLQAYTSMHLFFQFKTTSADGFILFNSGDGNNFIAVELVKGYIHYVFDLGNGPNVIKGNSDRPLNDNQWHNVVITRDNSNTHSLKVDTKVVTQVINGAKNLDLKGDLYMAGLAQGMYSNLPKLVASRDGFQGCLASVDLNGRLPDLINDALHRSGQIDRGCEGPSTTCQEDSCANQGVCMQQWEGFTCDCSMTSYSGNQCNDPGATYIFGKSGGLILYTWPANDRPSTRSDRLAVGFSTTVKDGVLVRIDSAPGLGDFLQLHIEQGKIGVVFNIGTVDISIKEERTPVNDGKYHVVRFTRNGANATLQVDNWPVNEHYPTGNTDNERRQMVKQKIPFKYNRPVEEWLQEKGRQLTIFNTQAQIAIGGKDKGRLFQGQLSGLYYDGLKVLNMAAENNPNIKINGSVRLVGEVPSVSGTTHTTSMPPEMSTTVMETTTTMATTTTRKNRSTASIQPTSDDLVSSAECSSDDEDFVECEPSTGRSDKSLSTSIFEGGYKAHAPKWESKDFRPNKVSETSRTTTTSLSPELIRFTASSSSGMVPKLPAGKMNNRDLKPQPDIVLLPLPTAYELDSTKLKSPLITCPMFRNVPTANPTEPGIRRVPGASEVIRESNSTTGMVVGIVAAAALCILILLYAMYKYRNRDEGSYQVDETRNYISNSAQSNGTLMKEKQASSKSGHKKQKNKDKEYYV.

The signal sequence occupies residues 1–27 (MSFTLHSVFFTLKVSSFLGSLVGLCLG). The Laminin G-like 1 domain maps to 28–202 (LEFMGLPNQW…SVQLEAEGPC (175 aa)). The Extracellular portion of the chain corresponds to 28-1503 (LEFMGLPNQW…EVIRESNSTT (1476 aa)). N-linked (GlcNAc...) asparagine glycans are attached at residues Asn58 and Asn105. An EGF-like 1 domain is found at 198–235 (AEGPCGERPCENGGICFLLDGHPTCDCSTTGYGGTLCS). 3 disulfides stabilise this stretch: Cys202–Cys213, Cys207–Cys222, and Cys224–Cys234. Laminin G-like domains lie at 260–444 (ENVA…VFKC) and 451–643 (DPIN…KSSC). 3 residues coordinate Ca(2+): Asp308, Leu325, and Met378. Intrachain disulfides connect Cys408–Cys444, Cys614–Cys643, Cys651–Cys662, Cys656–Cys671, and Cys673–Cys683. In terms of domain architecture, EGF-like 2 spans 647–684 (SAKQCDSYPCKNNAVCKDGWNRFICDCTGTGYWGRTCE). Laminin G-like domains lie at 689–861 (ILSY…IDYC) and 875–1050 (DPVT…DRGC). Ca(2+) is bound by residues Asp736 and Leu753. Asn761 is a glycosylation site (N-linked (GlcNAc...) asparagine). Arg811 is a binding site for Ca(2+). 4 disulfides stabilise this stretch: Cys1022-Cys1050, Cys1057-Cys1068, Cys1062-Cys1077, and Cys1079-Cys1089. An EGF-like 3 domain is found at 1053 to 1090 (PSTTCQEDSCANQGVCMQQWEGFTCDCSMTSYSGNQCN). Residues 1094-1294 (ATYIFGKSGG…NPNIKINGSV (201 aa)) enclose the Laminin G-like 6 domain. Asp1146 and Ile1163 together coordinate Ca(2+). Asn1193 carries an N-linked (GlcNAc...) asparagine glycan. Ca(2+)-binding residues include Ile1245 and Asn1247. N-linked (GlcNAc...) asparagine glycosylation is found at Asn1291 and Asn1335. Residues 1328–1352 (ATTTTRKNRSTASIQPTSDDLVSSA) are disordered. Positions 1337–1352 (STASIQPTSDDLVSSA) are enriched in polar residues. O-linked (Xyl...) (heparan sulfate) serine glycosylation occurs at Ser1351. Residue Asn1500 is glycosylated (N-linked (GlcNAc...) asparagine). Residues 1504–1524 (GMVVGIVAAAALCILILLYAM) traverse the membrane as a helical segment. Over 1525–1578 (YKYRNRDEGSYQVDETRNYISNSAQSNGTLMKEKQASSKSGHKKQKNKDKEYYV) the chain is Cytoplasmic. Residues 1546-1578 (NSAQSNGTLMKEKQASSKSGHKKQKNKDKEYYV) form a disordered region.

Belongs to the neurexin family. The laminin G-like domain 2 binds to NXPH1. Isoform 8/alpha-4B binds to alpha-dystroglycan. The cytoplasmic C-terminal region binds to CASK. Specific isoforms bind neuroligins NLGN1, NLGN2 and NLGN3. Interacts with CLSTN3. O-glycosylated; contains heparan sulfate. Heparan sulfate attachment is required for synapse development by mediating interactions with neuroligins. In terms of tissue distribution, brain.

It localises to the presynaptic cell membrane. Neuronal cell surface protein that may be involved in cell recognition and cell adhesion. May mediate intracellular signaling. The protein is Neurexin-3 (Nrxn3) of Rattus norvegicus (Rat).